Consider the following 380-residue polypeptide: Two-component response regulator ORR28 (380 aa).

The Response regulatory domain maps to 13–130; it reads SAMVIDEDKC…TIQNLWQHLD (118 aa). D65 is modified (4-aspartylphosphate). The myb-like GARP DNA-binding region spans 169 to 223; that stretch reads RKYYLMWTPHLQKKFLHALEILGEGQISLMIMDVDNIDRKQISTHLQKHRLQLKK. Residues 225–245 are disordered; that stretch reads LSKASFTKGSNEDTSNPSAKN. Positions 228–245 are enriched in polar residues; that stretch reads ASFTKGSNEDTSNPSAKN.

It belongs to the ARR family. Type-B subfamily. Two-component system major event consists of a His-to-Asp phosphorelay between a sensor histidine kinase (HK) and a response regulator (RR). In plants, the His-to-Asp phosphorelay involves an additional intermediate named Histidine-containing phosphotransfer protein (HPt). This multistep phosphorelay consists of a His-Asp-His-Asp sequential transfer of a phosphate group between first a His and an Asp of the HK protein, followed by the transfer to a conserved His of the HPt protein and finally the transfer to an Asp in the receiver domain of the RR protein.

The protein resides in the nucleus. In terms of biological role, transcriptional activator that binds specific DNA sequence. Functions as a response regulator involved in His-to-Asp phosphorelay signal transduction system. Phosphorylation of the Asp residue in the receiver domain activates the ability of the protein to promote the transcription of target genes. May directly activate some type-A response regulators in response to cytokinins. This chain is Two-component response regulator ORR28, found in Oryza sativa subsp. indica (Rice).